A 230-amino-acid chain; its full sequence is Ribose-5-phosphate isomerase A (230 aa).

Substrate is bound by residues 32-35 (TGST), 85-88 (DGAD), and 98-101 (KGGG). E107 serves as the catalytic Proton acceptor. A substrate-binding site is contributed by K125.

It belongs to the ribose 5-phosphate isomerase family. As to quaternary structure, homodimer.

It catalyses the reaction aldehydo-D-ribose 5-phosphate = D-ribulose 5-phosphate. Its pathway is carbohydrate degradation; pentose phosphate pathway; D-ribose 5-phosphate from D-ribulose 5-phosphate (non-oxidative stage): step 1/1. Catalyzes the reversible conversion of ribose-5-phosphate to ribulose 5-phosphate. This chain is Ribose-5-phosphate isomerase A, found in Burkholderia vietnamiensis (strain G4 / LMG 22486) (Burkholderia cepacia (strain R1808)).